A 157-amino-acid polypeptide reads, in one-letter code: Protein Smg (157 aa).

Belongs to the Smg family.

This Salmonella agona (strain SL483) protein is Protein Smg.